The chain runs to 94 residues: Co-chaperonin GroES (94 aa).

The protein belongs to the GroES chaperonin family. As to quaternary structure, heptamer of 7 subunits arranged in a ring. Interacts with the chaperonin GroEL.

The protein localises to the cytoplasm. Together with the chaperonin GroEL, plays an essential role in assisting protein folding. The GroEL-GroES system forms a nano-cage that allows encapsulation of the non-native substrate proteins and provides a physical environment optimized to promote and accelerate protein folding. GroES binds to the apical surface of the GroEL ring, thereby capping the opening of the GroEL channel. The polypeptide is Co-chaperonin GroES (Enterococcus faecalis (strain ATCC 700802 / V583)).